Reading from the N-terminus, the 476-residue chain is ATP synthase subunit beta (476 aa).

152–159 is an ATP binding site; it reads GGAGVGKT.

This sequence belongs to the ATPase alpha/beta chains family. As to quaternary structure, F-type ATPases have 2 components, CF(1) - the catalytic core - and CF(0) - the membrane proton channel. CF(1) has five subunits: alpha(3), beta(3), gamma(1), delta(1), epsilon(1). CF(0) has three main subunits: a(1), b(2) and c(9-12). The alpha and beta chains form an alternating ring which encloses part of the gamma chain. CF(1) is attached to CF(0) by a central stalk formed by the gamma and epsilon chains, while a peripheral stalk is formed by the delta and b chains.

It is found in the cell inner membrane. The enzyme catalyses ATP + H2O + 4 H(+)(in) = ADP + phosphate + 5 H(+)(out). Functionally, produces ATP from ADP in the presence of a proton gradient across the membrane. The catalytic sites are hosted primarily by the beta subunits. This chain is ATP synthase subunit beta, found in Granulibacter bethesdensis (strain ATCC BAA-1260 / CGDNIH1).